The primary structure comprises 418 residues: Probable carboxypeptidase AFLA_000940 (418 aa).

The first 18 residues, methionine 1 to alanine 18, serve as a signal peptide directing secretion. Asparagine 74 carries N-linked (GlcNAc...) asparagine glycosylation. Zn(2+) is bound at residue aspartate 147. The N-linked (GlcNAc...) asparagine glycan is linked to asparagine 168. Glutamate 179 functions as the Proton acceptor in the catalytic mechanism. Glutamate 180 provides a ligand contact to Zn(2+).

This sequence belongs to the peptidase M20A family. The cofactor is Zn(2+).

The protein localises to the secreted. This Aspergillus flavus (strain ATCC 200026 / FGSC A1120 / IAM 13836 / NRRL 3357 / JCM 12722 / SRRC 167) protein is Probable carboxypeptidase AFLA_000940.